Here is a 67-residue protein sequence, read N- to C-terminus: Small integral membrane protein 20 (67 aa).

The Mitochondrial matrix segment spans residues 1–6 (MSRNLR). Residues 7-27 (TALIFGGFISLIGAAFYPIYF) traverse the membrane as a helical segment. The Mitochondrial intermembrane portion of the chain corresponds to 28–67 (RPLMRLEEYKKEQAINRAGIVQEDVQPPGLKVWSDPFGRK). Phenylalanine 64 bears the Phenylalanine amide mark.

Component of the MITRAC (mitochondrial translation regulation assembly intermediate of cytochrome c oxidase complex) complex, the core components of this complex being COA3/MITRAC12 and COX14. Interacts with COA3/MITRAC12 and COX4I1. Directly interacts with newly synthesized MT-CO1/COX1. Expressed in the ovary, specifically in granulosa cells of follicles that have passed the primary stage and in oocytes (at protein level).

Its subcellular location is the mitochondrion inner membrane. The protein localises to the secreted. In terms of biological role, component of the MITRAC (mitochondrial translation regulation assembly intermediate of cytochrome c oxidase complex) complex, that regulates cytochrome c oxidase assembly. Promotes the progression of complex assembly after the association of MT-CO1/COX1 with COX4I1 and COX6C. Chaperone-like assembly factor required to stabilize newly synthesized MT-CO1/COX1 and to prevent its premature turnover. Its function is as follows. Peptide involved in a broad spectrum of regulatory functions. Is a ligand for GPR173. As part of the reproductive cycle, it regulates gonadotropin-releasing hormone (GnRH) signaling in the hypothalamus and pituitary gland which augments the release of luteinizing hormone. Plays a protective role in memory retention through activation of GNRHR. Regulates the secretion of AVP by hypothalamic neurons. Plays a role in the transduction of the itch sensation. Induces anxiolytic effects, reducing behavior associated with anxiety. Regulates food intake as well as satiation and satiety. In the ovary, it regulates follicular growth by stimulating granulosa cell proliferation by increasing the expression of GPR173, CREB1, CYP19A1, KITLG, FSHR, and LHCGR. It also increases the production of estradiol (E2). In the heart, it regulates contractility and relaxation. It also plays a cardioprotective role during ischemia, where it activates the SAFE and RISK pathways. Stimulates the proliferation and differentiation of preadipocytes. In pancreatic islet cells, it induces proliferation of islet cells as well as the production of INS. The sequence is that of Small integral membrane protein 20 (SMIM20) from Homo sapiens (Human).